We begin with the raw amino-acid sequence, 252 residues long: Ribonuclease 3 (252 aa).

Residues 3–125 form the RNase III domain; it reads LATLETRLDH…IFGAAFLDGG (123 aa). Glutamate 38 is a binding site for Mg(2+). The active site involves aspartate 42. Mg(2+)-binding residues include aspartate 111 and glutamate 114. Glutamate 114 is an active-site residue. Residues 152 to 222 form the DRBM domain; it reads DAKTLLQEFL…AKLALEAAQA (71 aa).

Belongs to the ribonuclease III family. As to quaternary structure, homodimer. Mg(2+) serves as cofactor.

It localises to the cytoplasm. It catalyses the reaction Endonucleolytic cleavage to 5'-phosphomonoester.. In terms of biological role, digests double-stranded RNA. Involved in the processing of primary rRNA transcript to yield the immediate precursors to the large and small rRNAs (23S and 16S). Processes some mRNAs, and tRNAs when they are encoded in the rRNA operon. Processes pre-crRNA and tracrRNA of type II CRISPR loci if present in the organism. This is Ribonuclease 3 from Bordetella petrii (strain ATCC BAA-461 / DSM 12804 / CCUG 43448).